The sequence spans 689 residues: Glycine--tRNA ligase beta subunit (689 aa).

It belongs to the class-II aminoacyl-tRNA synthetase family. As to quaternary structure, tetramer of two alpha and two beta subunits.

It localises to the cytoplasm. The catalysed reaction is tRNA(Gly) + glycine + ATP = glycyl-tRNA(Gly) + AMP + diphosphate. The polypeptide is Glycine--tRNA ligase beta subunit (Escherichia coli O139:H28 (strain E24377A / ETEC)).